Reading from the N-terminus, the 433-residue chain is Serine/threonine-protein kinase KDX1 (433 aa).

In terms of domain architecture, Protein kinase spans 23 to 318 (FHLTGKIGRG…VEDALEHPYL (296 aa)). Residues 29 to 37 (IGRGSHSLI) and lysine 55 each bind ATP. Residue aspartate 153 is the Proton acceptor of the active site.

Belongs to the protein kinase superfamily. Ser/Thr protein kinase family. Interacts with RLM1.

It carries out the reaction L-seryl-[protein] + ATP = O-phospho-L-seryl-[protein] + ADP + H(+). The enzyme catalyses L-threonyl-[protein] + ATP = O-phospho-L-threonyl-[protein] + ADP + H(+). Its function is as follows. Serine/threonine-protein kinase involved in the SLT2 mitogen-activated (MAP) kinase signaling pathway that regulates cell wall integrity. May also be involved in the mating pheromone and the CWI MAPK pathways. The protein is Serine/threonine-protein kinase KDX1 (KDX1) of Saccharomyces cerevisiae (strain ATCC 204508 / S288c) (Baker's yeast).